We begin with the raw amino-acid sequence, 96 residues long: Small ribosomal subunit protein bS18 (96 aa).

This sequence belongs to the bacterial ribosomal protein bS18 family. Part of the 30S ribosomal subunit. Forms a tight heterodimer with protein bS6.

Binds as a heterodimer with protein bS6 to the central domain of the 16S rRNA, where it helps stabilize the platform of the 30S subunit. This is Small ribosomal subunit protein bS18 from Borrelia garinii subsp. bavariensis (strain ATCC BAA-2496 / DSM 23469 / PBi) (Borreliella bavariensis).